A 1462-amino-acid chain; its full sequence is MADKDAQDFLKFLKSNASTDEKTRCLDTLRSFFNKNNIPNADLGLFVECFRLALTTVNPLLLRSSVACFETFLRRLRAQYPTWLKFRVPMLKNLVIDHIASRDLQKRVLNILIDLWHFNPSEIEKSLIHLSTTSKSAETRIQCFKWFVLAHNAHLSFDVKSLRPALYINLENANPSVREEAKEVLLLIYKNLSTSAKMQFITDVETTSGLRREILQSLVEELSLISSSSEVIIVQNSASSFQPAPFMTAVATLYPGVELENVKPLLANFSKQLEQDSASMLPAFEGRETEQNWSVRQDSVLRLRQYLRGNACIDYLPELLSVLKTLLPGILLALLSLRTTLSSSAIQLIKEMAIILKSNIDPFLELILPNLLKVCSVTKKLASQAANVTFAAILVNCGVLSRNLSFISLAAHDTNAQLRVFSSNWIFMLISLSPELKNLASLQTNLKAFEKLICRGLADSNSQVREVYRKSFWKLSEYFPSVQEELTNTLEPSVLKQLHLANPNRQAASFNFSGPKRAPIRPLSNLRSFSKSQKEETSSNSSNSSGTRRLGLPQRATPASRERVLPYTRSQAFHSTSLPPSLPSGHSPSIAIPSKRSVSATIKDESKTFELLKNIQRKYELILSGSSVDLPSAEFLSSNLTDALYSGSSICYSLIFSHSLLDLTFQYVDIASLLSQFLLCVYDPSNVGHSFALASFPYVKSHYDAHKYFPIVFDVLMNISNMAPHVKVFPFNTNQKRLIIHGCLLWLKEISDTKLNQLENKPFFVTDKLRYYSSKILAMTAKTKLTSKNWIPLSGLLFSLRAHDTFMFDGLLDRLNEESRTKLVSSWSKQDAFDYSKSSTHQEHLSKNLPTLNTSSSSNSSQTDLLVPHGKGETKETEMQSPIESKEGLLSKDTHIESPQGTSLEKENEEEGKNPVESNCSEESLDDHNIDQTLVNKKETLAQDSESLLQKNNALNEKGFENQFGLSSSAAKVLNKDTLDHVSGPISNSVSSSFKDFTRTPFKEINGERETGFELTSYVNALSKKDDINVQKTENVDESVGLNAMFMDNVNQDSLNSVDQSSGKDKLLLTSSTPNKPTTFFMPANEEILGSPAKDYDIHDQSYSVHELHSENMRENVGQSSLIYNNRDYMNTPMNDFSLSFSEIKGGILESPVESPMTGTISPIDADESVLHDIPAYESLNKSESNKYQEQAYSTPLHHTLNVLPKNKWILSRMHKMENGSPINVDKNLDDAVAALEAAVKELNDGSVNTKTLKFCIKVCKETPSMLYHSHGLLPAILHYIESNNSAMHISDCLILLHEFLVQGYQGVDMHTYHNIICILIEKAEKCKDEPVILAGIEDNITLIAEIADLQGLYEFTQQRLQSLNTETGEKSAPLLLMLLSAILMRLKDLEFLETKDLLRHVVLKYIDHTNPEIRKATFNVCLAVNTIVNNVDETFSILGGLNEGQRLLFMHYLKMKSDEKN.

Disordered regions lie at residues 528 to 563 (SFSKSQKEETSSNSSNSSGTRRLGLPQRATPASRER) and 573 to 592 (FHSTSLPPSLPSGHSPSIAI). Composition is skewed to low complexity over residues 538 to 552 (SSNSSNSSGTRRLGL) and 574 to 589 (HSTSLPPSLPSGHSPS). Residue serine 599 is modified to Phosphoserine. The tract at residues 838–928 (SSTHQEHLSK…NCSEESLDDH (91 aa)) is disordered. The segment covering 847 to 866 (KNLPTLNTSSSSNSSQTDLL) has biased composition (low complexity). The span at 870-896 (GKGETKETEMQSPIESKEGLLSKDTHI) shows a compositional bias: basic and acidic residues. Position 1221 is a phosphoserine (serine 1221). A coiled-coil region spans residues 1342-1367 (TLIAEIADLQGLYEFTQQRLQSLNTE).

This sequence belongs to the CLASP family. Interacts with microtubules. Interacts with dhc1, mal3 and tea1.

It is found in the cytoplasm. The protein localises to the cytoskeleton. It localises to the spindle. Its subcellular location is the microtubule organizing center. The protein resides in the spindle pole body. In terms of biological role, microtubule binding protein that regulates the stability of dynamic microtubules. Required for mitotic spindle formation. The polypeptide is Protein peg1 (peg1) (Schizosaccharomyces pombe (strain 972 / ATCC 24843) (Fission yeast)).